Here is a 429-residue protein sequence, read N- to C-terminus: Enolase (429 aa).

A (2R)-2-phosphoglycerate-binding site is contributed by Gln164. The Proton donor role is filled by Glu206. Residues Asp243, Glu286, and Asp313 each coordinate Mg(2+). Positions 338, 367, 368, and 389 each coordinate (2R)-2-phosphoglycerate. Residue Lys338 is the Proton acceptor of the active site.

It belongs to the enolase family. Requires Mg(2+) as cofactor.

Its subcellular location is the cytoplasm. The protein resides in the secreted. It localises to the cell surface. The catalysed reaction is (2R)-2-phosphoglycerate = phosphoenolpyruvate + H2O. Its pathway is carbohydrate degradation; glycolysis; pyruvate from D-glyceraldehyde 3-phosphate: step 4/5. In terms of biological role, catalyzes the reversible conversion of 2-phosphoglycerate (2-PG) into phosphoenolpyruvate (PEP). It is essential for the degradation of carbohydrates via glycolysis. This Thermosipho melanesiensis (strain DSM 12029 / CIP 104789 / BI429) protein is Enolase.